Reading from the N-terminus, the 107-residue chain is UPF0145 protein YbjQ (107 aa).

The protein belongs to the UPF0145 family.

The chain is UPF0145 protein YbjQ from Escherichia coli (strain SMS-3-5 / SECEC).